The following is a 240-amino-acid chain: Biosynthetic peptidoglycan transglycosylase (240 aa).

The chain crosses the membrane as a helical span at residues 16–36 (VLMALLCLFLIYELAMFSMVV).

The protein belongs to the glycosyltransferase 51 family.

It localises to the cell inner membrane. It carries out the reaction [GlcNAc-(1-&gt;4)-Mur2Ac(oyl-L-Ala-gamma-D-Glu-L-Lys-D-Ala-D-Ala)](n)-di-trans,octa-cis-undecaprenyl diphosphate + beta-D-GlcNAc-(1-&gt;4)-Mur2Ac(oyl-L-Ala-gamma-D-Glu-L-Lys-D-Ala-D-Ala)-di-trans,octa-cis-undecaprenyl diphosphate = [GlcNAc-(1-&gt;4)-Mur2Ac(oyl-L-Ala-gamma-D-Glu-L-Lys-D-Ala-D-Ala)](n+1)-di-trans,octa-cis-undecaprenyl diphosphate + di-trans,octa-cis-undecaprenyl diphosphate + H(+). It functions in the pathway cell wall biogenesis; peptidoglycan biosynthesis. In terms of biological role, peptidoglycan polymerase that catalyzes glycan chain elongation from lipid-linked precursors. The sequence is that of Biosynthetic peptidoglycan transglycosylase from Bordetella avium (strain 197N).